A 352-amino-acid polypeptide reads, in one-letter code: MRRLVRACYTGTGGYSYAKKADDVAREHGFDRVARLASNENPRPPSPAALEAATVALREVNRYPDERTSVLVEALRRYHGDYRFVTGSGMDGVIETVIRTVVEPGETMVVSTPTFSFYGIAAAAHGARVVNVPRREDFSVDTGAFIDACHGAKLAFLCSPNNPTGNSVPPEDVEAILEGMDGLLFLDNAYVDFADTDYRPLMRRYENLVIGRTMSKIFALAGLRVGYAFVPEWLEPFYQRAATPFALNSVSMAAAGGALADTERVRETRDHVREWRRRFLEEVPFRVYPSDANFVMIDVDPHTGDEAVARLAAKGVLVRSCTSFPGLGNHYIRVCIGEDWENIRFLEAIKNL.

Lys-216 carries the N6-(pyridoxal phosphate)lysine modification.

It belongs to the class-II pyridoxal-phosphate-dependent aminotransferase family. Histidinol-phosphate aminotransferase subfamily. Requires pyridoxal 5'-phosphate as cofactor.

It catalyses the reaction L-histidinol phosphate + 2-oxoglutarate = 3-(imidazol-4-yl)-2-oxopropyl phosphate + L-glutamate. Its pathway is amino-acid biosynthesis; L-histidine biosynthesis; L-histidine from 5-phospho-alpha-D-ribose 1-diphosphate: step 7/9. This chain is Histidinol-phosphate aminotransferase, found in Methanoculleus marisnigri (strain ATCC 35101 / DSM 1498 / JR1).